The following is a 395-amino-acid chain: 1-deoxy-D-xylulose 5-phosphate reductoisomerase (395 aa).

Residues threonine 10, glycine 11, serine 12, isoleucine 13, lysine 37, and asparagine 123 each contribute to the NADPH site. Lysine 124 contacts 1-deoxy-D-xylulose 5-phosphate. Glutamate 125 is a binding site for NADPH. Aspartate 149 is a binding site for Mn(2+). 1-deoxy-D-xylulose 5-phosphate is bound by residues serine 150, glutamate 151, serine 185, and histidine 208. Mn(2+) is bound at residue glutamate 151. NADPH is bound at residue glycine 214. 4 residues coordinate 1-deoxy-D-xylulose 5-phosphate: serine 221, asparagine 226, lysine 227, and glutamate 230. Glutamate 230 provides a ligand contact to Mn(2+).

The protein belongs to the DXR family. Mg(2+) serves as cofactor. Requires Mn(2+) as cofactor.

It carries out the reaction 2-C-methyl-D-erythritol 4-phosphate + NADP(+) = 1-deoxy-D-xylulose 5-phosphate + NADPH + H(+). The protein operates within isoprenoid biosynthesis; isopentenyl diphosphate biosynthesis via DXP pathway; isopentenyl diphosphate from 1-deoxy-D-xylulose 5-phosphate: step 1/6. Catalyzes the NADPH-dependent rearrangement and reduction of 1-deoxy-D-xylulose-5-phosphate (DXP) to 2-C-methyl-D-erythritol 4-phosphate (MEP). This Shewanella loihica (strain ATCC BAA-1088 / PV-4) protein is 1-deoxy-D-xylulose 5-phosphate reductoisomerase.